Consider the following 212-residue polypeptide: Guanylate kinase (212 aa).

The region spanning 7–187 (GLLIVLSGPS…AADRIIAIIR (181 aa)) is the Guanylate kinase-like domain. 14-21 (GPSGVGKA) provides a ligand contact to ATP.

This sequence belongs to the guanylate kinase family.

It localises to the cytoplasm. It carries out the reaction GMP + ATP = GDP + ADP. Essential for recycling GMP and indirectly, cGMP. The sequence is that of Guanylate kinase from Onion yellows phytoplasma (strain OY-M).